We begin with the raw amino-acid sequence, 252 residues long: Agamous-like MADS-box protein AGL6 (252 aa).

The MADS-box domain maps to 3-57 (RGRVEMKRIENKINRQVTFSKRRNGLLKKAYELSVLCDAEVALIIFSSRGKLYEF). The K-box domain occupies 86 to 176 (TQSWCQEVTK…KIKFETEGHA (91 aa)). The stretch at 91–173 (QEVTKLKSKY…KQLKIKFETE (83 aa)) forms a coiled coil.

As to quaternary structure, forms a heterodimer with AGAMOUS. Interacts with AGL15 and AGL16. Preferentially expressed in flowers.

It is found in the nucleus. Probable transcription factor. Forms a heterodimer via the K-box domain with AG, that could be involved in genes regulation during floral meristem development. This chain is Agamous-like MADS-box protein AGL6 (AGL6), found in Arabidopsis thaliana (Mouse-ear cress).